A 424-amino-acid polypeptide reads, in one-letter code: Serine--tRNA ligase (424 aa).

231-233 provides a ligand contact to L-serine; sequence TAE. 262 to 264 provides a ligand contact to ATP; it reads RAE. Position 285 (E285) interacts with L-serine. 349–352 contacts ATP; sequence EISS. S385 lines the L-serine pocket.

This sequence belongs to the class-II aminoacyl-tRNA synthetase family. Type-1 seryl-tRNA synthetase subfamily. In terms of assembly, homodimer. The tRNA molecule binds across the dimer.

Its subcellular location is the cytoplasm. It carries out the reaction tRNA(Ser) + L-serine + ATP = L-seryl-tRNA(Ser) + AMP + diphosphate + H(+). The enzyme catalyses tRNA(Sec) + L-serine + ATP = L-seryl-tRNA(Sec) + AMP + diphosphate + H(+). It participates in aminoacyl-tRNA biosynthesis; selenocysteinyl-tRNA(Sec) biosynthesis; L-seryl-tRNA(Sec) from L-serine and tRNA(Sec): step 1/1. In terms of biological role, catalyzes the attachment of serine to tRNA(Ser). Is also able to aminoacylate tRNA(Sec) with serine, to form the misacylated tRNA L-seryl-tRNA(Sec), which will be further converted into selenocysteinyl-tRNA(Sec). This chain is Serine--tRNA ligase, found in Geobacillus sp. (strain WCH70).